A 357-amino-acid chain; its full sequence is DNA replication and repair protein RecF (357 aa).

31-38 (GQNGAGKT) serves as a coordination point for ATP.

This sequence belongs to the RecF family.

The protein localises to the cytoplasm. The RecF protein is involved in DNA metabolism; it is required for DNA replication and normal SOS inducibility. RecF binds preferentially to single-stranded, linear DNA. It also seems to bind ATP. This Coxiella burnetii (strain CbuG_Q212) (Coxiella burnetii (strain Q212)) protein is DNA replication and repair protein RecF.